Reading from the N-terminus, the 364-residue chain is Chorismate synthase (364 aa).

2 residues coordinate NADP(+): Arg-48 and Arg-54. Residues 125 to 127 (RSS), Gly-282, 297 to 301 (KPPAS), and Arg-323 contribute to the FMN site.

Belongs to the chorismate synthase family. In terms of assembly, homotetramer. It depends on FMNH2 as a cofactor.

The enzyme catalyses 5-O-(1-carboxyvinyl)-3-phosphoshikimate = chorismate + phosphate. It participates in metabolic intermediate biosynthesis; chorismate biosynthesis; chorismate from D-erythrose 4-phosphate and phosphoenolpyruvate: step 7/7. Its function is as follows. Catalyzes the anti-1,4-elimination of the C-3 phosphate and the C-6 proR hydrogen from 5-enolpyruvylshikimate-3-phosphate (EPSP) to yield chorismate, which is the branch point compound that serves as the starting substrate for the three terminal pathways of aromatic amino acid biosynthesis. This reaction introduces a second double bond into the aromatic ring system. The sequence is that of Chorismate synthase from Chloroflexus aggregans (strain MD-66 / DSM 9485).